Here is a 317-residue protein sequence, read N- to C-terminus: Transaldolase (317 aa).

The active-site Schiff-base intermediate with substrate is the Lys126.

This sequence belongs to the transaldolase family. Type 1 subfamily. Homodimer.

The protein localises to the cytoplasm. It carries out the reaction D-sedoheptulose 7-phosphate + D-glyceraldehyde 3-phosphate = D-erythrose 4-phosphate + beta-D-fructose 6-phosphate. The protein operates within carbohydrate degradation; pentose phosphate pathway; D-glyceraldehyde 3-phosphate and beta-D-fructose 6-phosphate from D-ribose 5-phosphate and D-xylulose 5-phosphate (non-oxidative stage): step 2/3. Functionally, transaldolase is important for the balance of metabolites in the pentose-phosphate pathway. This Burkholderia thailandensis (strain ATCC 700388 / DSM 13276 / CCUG 48851 / CIP 106301 / E264) protein is Transaldolase.